The following is a 348-amino-acid chain: 4-hydroxy-2-oxovalerate aldolase 3 (348 aa).

Residues Ile8 to Gln260 form the Pyruvate carboxyltransferase domain. Residue Arg16–Asp17 coordinates substrate. Mn(2+) is bound at residue Asp17. His20 (proton acceptor) is an active-site residue. Residues Ser170 and His199 each contribute to the substrate site. Mn(2+) is bound by residues His199 and His201. Tyr290 lines the substrate pocket.

It belongs to the 4-hydroxy-2-oxovalerate aldolase family.

The catalysed reaction is (S)-4-hydroxy-2-oxopentanoate = acetaldehyde + pyruvate. In Burkholderia lata (strain ATCC 17760 / DSM 23089 / LMG 22485 / NCIMB 9086 / R18194 / 383), this protein is 4-hydroxy-2-oxovalerate aldolase 3.